Consider the following 200-residue polypeptide: Holliday junction branch migration complex subunit RuvA (200 aa).

Positions 1–63 (MFEYLTGLIT…EDAITLFGFA (63 aa)) are domain I. Residues 64-142 (TQAEKRLFTQ…AVQDEVQLDF (79 aa)) are domain II. The segment at 143–151 (TAPGPLGPS) is flexible linker. Positions 151-200 (SAALQDALAALESLGYTTKQVERVQKQLEGLQGELSTNDYLSQGLKLLSR) are domain III.

Belongs to the RuvA family. As to quaternary structure, homotetramer. Forms an RuvA(8)-RuvB(12)-Holliday junction (HJ) complex. HJ DNA is sandwiched between 2 RuvA tetramers; dsDNA enters through RuvA and exits via RuvB. An RuvB hexamer assembles on each DNA strand where it exits the tetramer. Each RuvB hexamer is contacted by two RuvA subunits (via domain III) on 2 adjacent RuvB subunits; this complex drives branch migration. In the full resolvosome a probable DNA-RuvA(4)-RuvB(12)-RuvC(2) complex forms which resolves the HJ.

The protein resides in the cytoplasm. Its function is as follows. The RuvA-RuvB-RuvC complex processes Holliday junction (HJ) DNA during genetic recombination and DNA repair, while the RuvA-RuvB complex plays an important role in the rescue of blocked DNA replication forks via replication fork reversal (RFR). RuvA specifically binds to HJ cruciform DNA, conferring on it an open structure. The RuvB hexamer acts as an ATP-dependent pump, pulling dsDNA into and through the RuvAB complex. HJ branch migration allows RuvC to scan DNA until it finds its consensus sequence, where it cleaves and resolves the cruciform DNA. The protein is Holliday junction branch migration complex subunit RuvA of Limosilactobacillus fermentum (strain NBRC 3956 / LMG 18251) (Lactobacillus fermentum).